Here is a 209-residue protein sequence, read N- to C-terminus: Large ribosomal subunit protein uL3 (209 aa).

Q150 is subject to N5-methylglutamine.

The protein belongs to the universal ribosomal protein uL3 family. Part of the 50S ribosomal subunit. Forms a cluster with proteins L14 and L19. Post-translationally, methylated by PrmB.

Functionally, one of the primary rRNA binding proteins, it binds directly near the 3'-end of the 23S rRNA, where it nucleates assembly of the 50S subunit. In Pasteurella multocida (strain Pm70), this protein is Large ribosomal subunit protein uL3.